The sequence spans 557 residues: Membrane protein insertase YidC (557 aa).

The next 5 helical transmembrane spans lie at 3–23, 363–383, 437–457, 476–496, and 507–527; these read IKRTVLWVIFFMSAVMLFDNW, FVGNWGWAIVLLTLLIKAVFF, LPVVIQIPVFISLYWVLLASV, PYFILPVLMAVSMFVQTKLNP, and MMFMPIAFSVMFFFFPAGLVL.

Belongs to the OXA1/ALB3/YidC family. Type 1 subfamily. Interacts with the Sec translocase complex via SecD. Specifically interacts with transmembrane segments of nascent integral membrane proteins during membrane integration.

It localises to the cell inner membrane. In terms of biological role, required for the insertion and/or proper folding and/or complex formation of integral membrane proteins into the membrane. Involved in integration of membrane proteins that insert both dependently and independently of the Sec translocase complex, as well as at least some lipoproteins. Aids folding of multispanning membrane proteins. This Burkholderia thailandensis (strain ATCC 700388 / DSM 13276 / CCUG 48851 / CIP 106301 / E264) protein is Membrane protein insertase YidC.